The following is a 363-amino-acid chain: Holliday junction branch migration complex subunit RuvB (363 aa).

The tract at residues 1–23 (MHKDEDQRLLGPAPLPNDPDRSL) is disordered. The large ATPase domain (RuvB-L) stretch occupies residues 1 to 184 (MHKDEDQRLL…FGIPIRLNFY (184 aa)). ATP contacts are provided by residues Leu23, Arg24, Gly65, Lys68, Thr69, Thr70, 131 to 133 (EDY), Arg174, Tyr184, and Arg221. Thr69 serves as a coordination point for Mg(2+). The tract at residues 185–255 (TIEELEYIVQ…IADEALSRLE (71 aa)) is small ATPAse domain (RuvB-S). The tract at residues 258–363 (HLGLDPLDRR…QTTLWDGEDD (106 aa)) is head domain (RuvB-H). Residues Arg294, Arg313, and Arg318 each contribute to the DNA site.

The protein belongs to the RuvB family. In terms of assembly, homohexamer. Forms an RuvA(8)-RuvB(12)-Holliday junction (HJ) complex. HJ DNA is sandwiched between 2 RuvA tetramers; dsDNA enters through RuvA and exits via RuvB. An RuvB hexamer assembles on each DNA strand where it exits the tetramer. Each RuvB hexamer is contacted by two RuvA subunits (via domain III) on 2 adjacent RuvB subunits; this complex drives branch migration. In the full resolvosome a probable DNA-RuvA(4)-RuvB(12)-RuvC(2) complex forms which resolves the HJ.

The protein localises to the cytoplasm. It carries out the reaction ATP + H2O = ADP + phosphate + H(+). Its function is as follows. The RuvA-RuvB-RuvC complex processes Holliday junction (HJ) DNA during genetic recombination and DNA repair, while the RuvA-RuvB complex plays an important role in the rescue of blocked DNA replication forks via replication fork reversal (RFR). RuvA specifically binds to HJ cruciform DNA, conferring on it an open structure. The RuvB hexamer acts as an ATP-dependent pump, pulling dsDNA into and through the RuvAB complex. RuvB forms 2 homohexamers on either side of HJ DNA bound by 1 or 2 RuvA tetramers; 4 subunits per hexamer contact DNA at a time. Coordinated motions by a converter formed by DNA-disengaged RuvB subunits stimulates ATP hydrolysis and nucleotide exchange. Immobilization of the converter enables RuvB to convert the ATP-contained energy into a lever motion, pulling 2 nucleotides of DNA out of the RuvA tetramer per ATP hydrolyzed, thus driving DNA branch migration. The RuvB motors rotate together with the DNA substrate, which together with the progressing nucleotide cycle form the mechanistic basis for DNA recombination by continuous HJ branch migration. Branch migration allows RuvC to scan DNA until it finds its consensus sequence, where it cleaves and resolves cruciform DNA. This is Holliday junction branch migration complex subunit RuvB from Bartonella tribocorum (strain CIP 105476 / IBS 506).